The sequence spans 445 residues: MDIRQVTETIAMIEEQNFDIRTITMGISLLDCIDPDINRAAEKIYQKITTKAANLVAVGDEIAAELGIPIVNKRVSVTPISLIGAATDATDYVVLAKALDKAAKEIGVDFIGGFSALVQKGYQKGDEILINSIPRALAETDKVCSSVNIGSTKSGINMTAVADMGRIIKETANLSDMGVAKLVVFANAVEDNPFMAGAFHGVGEADVIINVGVSGPGVVKRALEKVRGQSFDVVAETVKKTAFKITRIGQLVGQMASERLGVEFGIVDLSLAPTPAVGDSVARVLEEMGLETVGTHGTTAALALLNDQVKKGGVMACNQVGGLSGAFIPVSEDEGMIAAVQNGSLNLEKLEAMTAICSVGLDMIAIPEDTPAETIAAMIADEAAIGVINMKTTAVRIIPKGKEGDMIEFGGLLGTAPVMKVNGASSVDFISRGGQIPAPIHSFKN.

The protein belongs to the UPF0210 family. In terms of assembly, homodimer.

This Streptococcus pneumoniae serotype 4 (strain ATCC BAA-334 / TIGR4) protein is UPF0210 protein SP_0239.